The following is a 207-amino-acid chain: Outer-membrane lipoprotein LolB (207 aa).

Positions 1–23 are cleaved as a signal peptide; that stretch reads MPTMNRSRRLALLCLGAPLLLAA. C24 carries N-palmitoyl cysteine lipidation. A lipid anchor (S-diacylglycerol cysteine) is attached at C24. The disordered stretch occupies residues 171-207; sequence PSASQAPAPRPRRIDLEREGGPTPLAVKLVIDPEEAP.

The protein belongs to the LolB family. Monomer.

The protein localises to the cell outer membrane. Plays a critical role in the incorporation of lipoproteins in the outer membrane after they are released by the LolA protein. The protein is Outer-membrane lipoprotein LolB of Cupriavidus pinatubonensis (strain JMP 134 / LMG 1197) (Cupriavidus necator (strain JMP 134)).